The primary structure comprises 121 residues: Large ribosomal subunit protein bL12 (121 aa).

Belongs to the bacterial ribosomal protein bL12 family. In terms of assembly, homodimer. Part of the ribosomal stalk of the 50S ribosomal subunit. Forms a multimeric L10(L12)X complex, where L10 forms an elongated spine to which 2 to 4 L12 dimers bind in a sequential fashion. Binds GTP-bound translation factors.

Functionally, forms part of the ribosomal stalk which helps the ribosome interact with GTP-bound translation factors. Is thus essential for accurate translation. This is Large ribosomal subunit protein bL12 from Oenococcus oeni (strain ATCC BAA-331 / PSU-1).